We begin with the raw amino-acid sequence, 235 residues long: Glucosamine-6-phosphate deaminase (235 aa).

Catalysis depends on Asp-62, which acts as the Proton acceptor; for enolization step. The active-site For ring-opening step is Asn-128. His-130 acts as the Proton acceptor; for ring-opening step in catalysis. Catalysis depends on Glu-135, which acts as the For ring-opening step.

This sequence belongs to the glucosamine/galactosamine-6-phosphate isomerase family. NagB subfamily.

It carries out the reaction alpha-D-glucosamine 6-phosphate + H2O = beta-D-fructose 6-phosphate + NH4(+). It participates in amino-sugar metabolism; N-acetylneuraminate degradation; D-fructose 6-phosphate from N-acetylneuraminate: step 5/5. In terms of biological role, catalyzes the reversible isomerization-deamination of glucosamine 6-phosphate (GlcN6P) to form fructose 6-phosphate (Fru6P) and ammonium ion. In Lactococcus lactis subsp. cremoris (strain SK11), this protein is Glucosamine-6-phosphate deaminase.